Consider the following 263-residue polypeptide: Ribonuclease HII (263 aa).

Positions Gln-71 to Asn-262 constitute an RNase H type-2 domain. Residues Asp-77, Glu-78, and Asp-172 each contribute to the a divalent metal cation site.

This sequence belongs to the RNase HII family. It depends on Mn(2+) as a cofactor. Mg(2+) serves as cofactor.

The protein resides in the cytoplasm. It carries out the reaction Endonucleolytic cleavage to 5'-phosphomonoester.. Endonuclease that specifically degrades the RNA of RNA-DNA hybrids. The protein is Ribonuclease HII of Streptococcus pyogenes serotype M3 (strain ATCC BAA-595 / MGAS315).